The chain runs to 368 residues: Methionine import ATP-binding protein MetN (368 aa).

The ABC transporter domain maps to 5–260 (IELNNLSVQF…PKEALTKQFI (256 aa)). 41 to 48 (GYSGAGKS) is a binding site for ATP.

The protein belongs to the ABC transporter superfamily. Methionine importer (TC 3.A.1.24) family. The complex is composed of two ATP-binding proteins (MetN), two transmembrane proteins (MetI) and a solute-binding protein (MetQ).

The protein resides in the cell membrane. It carries out the reaction L-methionine(out) + ATP + H2O = L-methionine(in) + ADP + phosphate + H(+). The catalysed reaction is D-methionine(out) + ATP + H2O = D-methionine(in) + ADP + phosphate + H(+). Its function is as follows. Part of the ABC transporter complex MetNIQ involved in methionine import. Responsible for energy coupling to the transport system. The protein is Methionine import ATP-binding protein MetN of Lactococcus lactis subsp. lactis (strain IL1403) (Streptococcus lactis).